The chain runs to 101 residues: Small ribosomal subunit protein uS14 (101 aa).

It belongs to the universal ribosomal protein uS14 family. Part of the 30S ribosomal subunit. Contacts proteins S3 and S10.

In terms of biological role, binds 16S rRNA, required for the assembly of 30S particles and may also be responsible for determining the conformation of the 16S rRNA at the A site. The chain is Small ribosomal subunit protein uS14 from Neorickettsia sennetsu (strain ATCC VR-367 / Miyayama) (Ehrlichia sennetsu).